The following is a 697-amino-acid chain: DNA ligase (697 aa).

NAD(+) contacts are provided by residues Asp-34 to Asp-38, Ser-83 to Leu-84, and Glu-114. Lys-116 (N6-AMP-lysine intermediate) is an active-site residue. Residues Arg-137, Glu-171, Lys-315, and Lys-339 each contribute to the NAD(+) site. Residues Cys-430, Cys-433, Cys-448, and Cys-453 each contribute to the Zn(2+) site. The region spanning Lys-616 to Ala-697 is the BRCT domain.

Belongs to the NAD-dependent DNA ligase family. LigA subfamily. Mg(2+) is required as a cofactor. Mn(2+) serves as cofactor.

It catalyses the reaction NAD(+) + (deoxyribonucleotide)n-3'-hydroxyl + 5'-phospho-(deoxyribonucleotide)m = (deoxyribonucleotide)n+m + AMP + beta-nicotinamide D-nucleotide.. Its function is as follows. DNA ligase that catalyzes the formation of phosphodiester linkages between 5'-phosphoryl and 3'-hydroxyl groups in double-stranded DNA using NAD as a coenzyme and as the energy source for the reaction. It is essential for DNA replication and repair of damaged DNA. The polypeptide is DNA ligase (Mycoplasmopsis synoviae (strain 53) (Mycoplasma synoviae)).